Here is a 310-residue protein sequence, read N- to C-terminus: MDKENSSMVTEFIFMGITQDPQMEIIFFVVFLIVYLVNVVGNIGMIILITTDTQLHTPMYFFLCNLSFVDLGYSSAIAPRMLADFLTNHKVISFSSCATQFAFFVGFVDAECYVLAAMAYGRFVAICRPLHYSTFMSKQVCLALMLGSYLAGLVSLVAHTTLTFSLSYCGSNIINHFFCEIPPLLALSCSDTYISEILLFSLCGFIEFSTILIIFISYTFILVAIIRMRSAEGRLKAFSTCGSHLTGITLFYGTVMFMYLRPTSSYSLDQDKWASVFYTVIIPMLNPLIYSLRNKDVKAAFKKLIGKKSQ.

The Extracellular portion of the chain corresponds to 1 to 28 (MDKENSSMVTEFIFMGITQDPQMEIIFF). Asn5 carries N-linked (GlcNAc...) asparagine glycosylation. Residues 29 to 49 (VVFLIVYLVNVVGNIGMIILI) form a helical membrane-spanning segment. Topologically, residues 50-58 (TTDTQLHTP) are cytoplasmic. The chain crosses the membrane as a helical span at residues 59–79 (MYFFLCNLSFVDLGYSSAIAP). The Extracellular portion of the chain corresponds to 80-100 (RMLADFLTNHKVISFSSCATQ). A disulfide bridge connects residues Cys97 and Cys189. A helical membrane pass occupies residues 101 to 120 (FAFFVGFVDAECYVLAAMAY). Over 121-139 (GRFVAICRPLHYSTFMSKQ) the chain is Cytoplasmic. A helical transmembrane segment spans residues 140-160 (VCLALMLGSYLAGLVSLVAHT). Residues 161 to 205 (TLTFSLSYCGSNIINHFFCEIPPLLALSCSDTYISEILLFSLCGF) are Extracellular-facing. A helical transmembrane segment spans residues 206-226 (IEFSTILIIFISYTFILVAII). Residues 227 to 239 (RMRSAEGRLKAFS) are Cytoplasmic-facing. Residues 240-260 (TCGSHLTGITLFYGTVMFMYL) traverse the membrane as a helical segment. Residues 261 to 271 (RPTSSYSLDQD) lie on the Extracellular side of the membrane. The helical transmembrane segment at 272 to 292 (KWASVFYTVIIPMLNPLIYSL) threads the bilayer. Residues 293–310 (RNKDVKAAFKKLIGKKSQ) are Cytoplasmic-facing.

Belongs to the G-protein coupled receptor 1 family.

Its subcellular location is the cell membrane. In terms of biological role, odorant receptor. In Homo sapiens (Human), this protein is Olfactory receptor 5AR1.